The sequence spans 204 residues: Inactive ribonuclease-like protein 9 (204 aa).

A signal peptide spans 1-26; that stretch reads MMRTLITTHPLLLLLLLQQLLQPVQF. 3 disulfides stabilise this stretch: cysteine 97-cysteine 152, cysteine 115-cysteine 167, and cysteine 122-cysteine 129. Asparagine 130 and asparagine 142 each carry an N-linked (GlcNAc...) asparagine glycan.

The protein belongs to the pancreatic ribonuclease family.

It localises to the secreted. Does not exhibit any ribonuclease activity. This Macaca mulatta (Rhesus macaque) protein is Inactive ribonuclease-like protein 9 (RNASE9).